Reading from the N-terminus, the 204-residue chain is Thymidine kinase (204 aa).

ATP is bound by residues 15–22 (GSMFSGKS) and 88–91 (DEVQ). Residue E89 is the Proton acceptor of the active site. Zn(2+) is bound by residues C145, C148, C183, and C186.

It belongs to the thymidine kinase family. Homotetramer.

The protein resides in the cytoplasm. The catalysed reaction is thymidine + ATP = dTMP + ADP + H(+). The protein is Thymidine kinase of Halalkalibacterium halodurans (strain ATCC BAA-125 / DSM 18197 / FERM 7344 / JCM 9153 / C-125) (Bacillus halodurans).